The chain runs to 575 residues: Triokinase/FMN cyclase (575 aa).

The 328-residue stretch at 9-336 (SVAGCADDAL…IDAETTAAAW (328 aa)) folds into the DhaK domain. Dihydroxyacetone contacts are provided by residues 56 to 59 (GSGH), Lys-109, and Asp-114. His-221 functions as the Tele-hemiaminal-histidine intermediate in the catalytic mechanism. The tract at residues 348–367 (KRSRVAPAEPQEAPDSTAAG) is disordered. Ser-350 carries the phosphoserine modification. Positions 372 to 571 (KRMALVLERV…AAAILRAILE (200 aa)) constitute a DhaL domain. Residues 401 to 404 (DGDC), 446 to 447 (SS), Gly-486, and 494 to 495 (TM) contribute to the ATP site. Phosphoserine is present on residues Ser-511 and Ser-545. Residue 556–558 (DPG) coordinates ATP.

Belongs to the dihydroxyacetone kinase (DAK) family. Homodimer. Interacts with IFIH1 (via the CARD domains), the interaction is inhibited by viral infection. The cofactor is Mg(2+). It depends on Mn(2+) as a cofactor. Co(2+) serves as cofactor. As to expression, detected in erythrocytes (at protein level).

It carries out the reaction dihydroxyacetone + ATP = dihydroxyacetone phosphate + ADP + H(+). The catalysed reaction is D-glyceraldehyde + ATP = D-glyceraldehyde 3-phosphate + ADP + H(+). The enzyme catalyses FAD = riboflavin cyclic-4',5'-phosphate + AMP + H(+). Its activity is regulated as follows. Each activity is inhibited by the substrate(s) of the other. Functionally, catalyzes both the phosphorylation of dihydroxyacetone and of glyceraldehyde, and the splitting of ribonucleoside diphosphate-X compounds among which FAD is the best substrate. Represses IFIH1-mediated cellular antiviral response. This chain is Triokinase/FMN cyclase, found in Homo sapiens (Human).